A 586-amino-acid chain; its full sequence is MATTIPFDFRSHCVQLLAQAVKQVLPEETEIHIELQRPKQMDHGDYSTNLAMKLAKRLRRNPLELAKVLIGALPDSPYVGKTVVAGGGFVNFFLKKTAKQQFLLTVLQAADSFGHSKLGAGKTIQIEFVSANPTGPLHVGHGRGAAFGASLANIMAAAGYAVTREFYVNDAGRQMDILALSTWLRYLDLCGIALPFPSNAYQGRYVVDMALEIHRIHGDRYAHYSDSPTQQLAEINAKAAADGEDEYLDNLITAAKSILGEDYAYLHNFVLTEQLNDCRNDLMEFGVEFENWFSEQSLFDSGMVARAVQLLDDKKLLYRQDGALWFQSTGFGDEKDRVVQRENGQYTYFASDIAYHLSKYERGFDYMLNIWGADHHGYISRVKGAIEALSLDSDKLEIALVQFAVLYRDGNKISMSTRSGEFVTLRQLRQEVGNDAARFFYVLRKSDQHLDFDLDLAKSQSNDNPVYYVQYAHARICSVLEQWGGAVDIFGRAETELLTNPAELVLLQKIIDFPDTIEAAAKEHAPHLIAFFLRELASEFHSYYNSTRFLIPDEALKIARLALISAVCQVLSKGLSLLGVTSPRKM.

Positions 131–141 match the 'HIGH' region motif; it reads ANPTGPLHVGH.

The protein belongs to the class-I aminoacyl-tRNA synthetase family. In terms of assembly, monomer.

The protein resides in the cytoplasm. The catalysed reaction is tRNA(Arg) + L-arginine + ATP = L-arginyl-tRNA(Arg) + AMP + diphosphate. The protein is Arginine--tRNA ligase of Nitrosomonas eutropha (strain DSM 101675 / C91 / Nm57).